Consider the following 383-residue polypeptide: S-adenosylmethionine synthase (383 aa).

Position 15 (His-15) interacts with ATP. Position 17 (Asp-17) interacts with Mg(2+). Residue Glu-43 coordinates K(+). Glu-56 and Gln-99 together coordinate L-methionine. Positions 99 to 109 are flexible loop; the sequence is QSPDINQGVDR. ATP is bound by residues 164–166, 230–231, Asp-239, 245–246, Ala-262, and Lys-266; these read DAK, RF, and RK. An L-methionine-binding site is contributed by Asp-239. Lys-270 provides a ligand contact to L-methionine.

Belongs to the AdoMet synthase family. As to quaternary structure, homotetramer; dimer of dimers. Mg(2+) serves as cofactor. K(+) is required as a cofactor.

The protein localises to the cytoplasm. The catalysed reaction is L-methionine + ATP + H2O = S-adenosyl-L-methionine + phosphate + diphosphate. The protein operates within amino-acid biosynthesis; S-adenosyl-L-methionine biosynthesis; S-adenosyl-L-methionine from L-methionine: step 1/1. Catalyzes the formation of S-adenosylmethionine (AdoMet) from methionine and ATP. The overall synthetic reaction is composed of two sequential steps, AdoMet formation and the subsequent tripolyphosphate hydrolysis which occurs prior to release of AdoMet from the enzyme. The polypeptide is S-adenosylmethionine synthase (Shewanella amazonensis (strain ATCC BAA-1098 / SB2B)).